We begin with the raw amino-acid sequence, 78 residues long: Small ribosomal subunit protein uS15 (78 aa).

Belongs to the universal ribosomal protein uS15 family. Part of the 30S ribosomal subunit. Forms a bridge to the 50S subunit in the 70S ribosome, contacting the 23S rRNA.

In terms of biological role, one of the primary rRNA binding proteins, it binds directly to 16S rRNA where it helps nucleate assembly of the platform of the 30S subunit by binding and bridging several RNA helices of the 16S rRNA. Its function is as follows. Forms an intersubunit bridge (bridge B4) with the 23S rRNA of the 50S subunit in the ribosome. In Karelsulcia muelleri (strain GWSS) (Sulcia muelleri), this protein is Small ribosomal subunit protein uS15.